The primary structure comprises 538 residues: Cytochrome P450 monooxygenase flvC (538 aa).

The helical transmembrane segment at 17–37 threads the bilayer; it reads TVLIAGLLVYWVGSAIFLAVL. C478 contributes to the heme binding site.

It belongs to the cytochrome P450 family. The cofactor is heme.

The protein resides in the membrane. The enzyme catalyses pre-flavunoidine + reduced [NADPH--hemoprotein reductase] + O2 = 10-hydroxy-pre-flavunoidine + oxidized [NADPH--hemoprotein reductase] + H2O + H(+). The protein operates within secondary metabolite biosynthesis; terpenoid biosynthesis. Cytochrome P450 monooxygenase; part of the gene cluster that mediates the biosynthesis of flavunoidine, an alkaloidal terpenoid with a tetracyclic cage-like core connected to dimethylcadaverine via a C-N bond and acylated with 5,5-dimethyl-L-pipecolate. The tetracyclic core is synthesized by the terpene cyclase flvE and the cytochrome P450 monooxygenase flvD. The terpene cyclase flvE catalyzes the cyclization of farnesyl pyrophosphate (FPP) to form (1R,4R,5S)-(+)-acoradiene and the cytochrome P450 monooxygenase flvD is then responsible for oxidative conversion of (1R,4R,5S)-(+)-acoradiene into the tetracyclic cage present in the final product flavunoidine. In parallel, the N-methyltransferase flvH dimethylates L-lysine to give N,N-dimethyl-L-Lysin which is decarboxylated by flvG to afford dimethylcadaverine. The terpene cyclase-like protein flvF is the enzyme that attaches the dimethylcadaverine precusor at the C-7 of the tetracyclic cage to yield pre-flavunoidine. The cytochrome monooxygenase flvC hydroxylates the C-10 position of pre-flavunoidine whereas the NRPS flvI acylates the terpenoid core at the hydroxylated C-10 with dimethylpipecolate to yield final flavunoidine. The bifunctional enzyme flvA and the dehydrogenase flvB are responsible for the synthesis of the dimethylpipecolate precursor. The PLP-dependent lyase domain of flvA might use L-O-acetyl-homoserine and alpha-keto-isovalerate to form an intermediary ketone that can cyclize intramolecularly to yield an imine. The imine can be reduced by flvB to yield the 6-carboxylated pipecolate. The C-terminal alpha-KG-dependent oxygenase domain of flvA is then proposed to catalyze the decarboxylation to yield dimethylpipecolate. This is Cytochrome P450 monooxygenase flvC from Aspergillus flavus (strain ATCC 200026 / FGSC A1120 / IAM 13836 / NRRL 3357 / JCM 12722 / SRRC 167).